Consider the following 165-residue polypeptide: Lipoprotein signal peptidase (165 aa).

The next 3 helical transmembrane spans lie at 9–29 (PFLW…LAVV), 65–85 (WQKY…LFFL), and 97–119 (TGYA…HGFV). Active-site residues include aspartate 121 and aspartate 139. Residues 134–154 (VFNVADIAICIGAGLLAIDAF) form a helical membrane-spanning segment.

Belongs to the peptidase A8 family.

Its subcellular location is the cell inner membrane. It catalyses the reaction Release of signal peptides from bacterial membrane prolipoproteins. Hydrolyzes -Xaa-Yaa-Zaa-|-(S,diacylglyceryl)Cys-, in which Xaa is hydrophobic (preferably Leu), and Yaa (Ala or Ser) and Zaa (Gly or Ala) have small, neutral side chains.. The protein operates within protein modification; lipoprotein biosynthesis (signal peptide cleavage). This protein specifically catalyzes the removal of signal peptides from prolipoproteins. This is Lipoprotein signal peptidase from Histophilus somni (strain 2336) (Haemophilus somnus).